The sequence spans 150 residues: Ribosome maturation factor RimP (150 aa).

It belongs to the RimP family.

Its subcellular location is the cytoplasm. In terms of biological role, required for maturation of 30S ribosomal subunits. The protein is Ribosome maturation factor RimP of Methylococcus capsulatus (strain ATCC 33009 / NCIMB 11132 / Bath).